We begin with the raw amino-acid sequence, 226 residues long: MARILRASCLLSLLLAGFVPPGRGQEKSKTDCHGGMSGTIYEYGALTIDGEEYIPFKQYAGKYILFVNVASYUGLTDQYLELNALQEELGPFGLVILGFPSNQFGKQEPGENSEILPSLKYVRPGGGFVPNFQLFEKGDVNGEKEQKFYTFLKNSCPPTAELLGSPGRLFWEPMKIHDIRWNFEKFLVGPDGIPVMRWYHRTTVSNVKMDILSYMRRQAALSARGK.

A signal peptide spans 1–24; the sequence is MARILRASCLLSLLLAGFVPPGRG. Sec73 is a catalytic residue. A non-standard amino acid (selenocysteine) is located at residue Sec73.

Belongs to the glutathione peroxidase family. In terms of assembly, homotetramer. Secreted in plasma.

The protein localises to the secreted. The catalysed reaction is 2 glutathione + H2O2 = glutathione disulfide + 2 H2O. It catalyses the reaction tert-butyl hydroperoxide + 2 glutathione = tert-butanol + glutathione disulfide + H2O. Functionally, protects cells and enzymes from oxidative damage, by catalyzing the reduction of hydrogen peroxide, lipid peroxides and organic hydroperoxide, by glutathione. This is Glutathione peroxidase 3 from Mus musculus (Mouse).